A 575-amino-acid chain; its full sequence is Phosphoenolpyruvate-protein phosphotransferase (575 aa).

The active-site Tele-phosphohistidine intermediate is the histidine 191. Residues arginine 298 and arginine 334 each contribute to the phosphoenolpyruvate site. The Mg(2+) site is built by glutamate 435 and aspartate 459. Residues 458 to 459 and arginine 469 contribute to the phosphoenolpyruvate site; that span reads ND. Cysteine 506 functions as the Proton donor in the catalytic mechanism.

Belongs to the PEP-utilizing enzyme family. Homodimer. The cofactor is Mg(2+).

The protein resides in the cytoplasm. The catalysed reaction is L-histidyl-[protein] + phosphoenolpyruvate = N(pros)-phospho-L-histidyl-[protein] + pyruvate. Functionally, general (non sugar-specific) component of the phosphoenolpyruvate-dependent sugar phosphotransferase system (sugar PTS). This major carbohydrate active-transport system catalyzes the phosphorylation of incoming sugar substrates concomitantly with their translocation across the cell membrane. Enzyme I transfers the phosphoryl group from phosphoenolpyruvate (PEP) to the phosphoryl carrier protein (HPr). In Lactococcus lactis subsp. cremoris (Streptococcus cremoris), this protein is Phosphoenolpyruvate-protein phosphotransferase (ptsI).